Consider the following 96-residue polypeptide: Small ribosomal subunit protein bS16 (96 aa).

This sequence belongs to the bacterial ribosomal protein bS16 family.

The polypeptide is Small ribosomal subunit protein bS16 (Anaplasma phagocytophilum (strain HZ)).